A 99-amino-acid polypeptide reads, in one-letter code: Protein 7.3 (99 aa).

The disordered stretch occupies residues 59 to 99 (VPEKEVSTEDEAQTESGRKKARAGGKKSLSVARSSGGGINI).

The protein belongs to the T7likevirus protein 7.3 family.

It localises to the virion. In terms of biological role, plays an essential role most probably in virion tail assembly. May form a scaffold around which gp11 and gp12 polymerize. Gets ejected from the infecting particle into the bacterial cell. In Escherichia phage T7 (Bacteriophage T7), this protein is Protein 7.3.